A 376-amino-acid chain; its full sequence is Hydroxylysine kinase (376 aa).

Aspartate 229 acts as the Proton acceptor in catalysis.

Belongs to the aminoglycoside phosphotransferase family.

It is found in the cytoplasm. The catalysed reaction is (5R)-5-hydroxy-L-lysine + GTP = (5R)-5-phosphooxy-L-lysine + GDP + H(+). Its function is as follows. Catalyzes the GTP-dependent phosphorylation of 5-hydroxy-L-lysine. This chain is Hydroxylysine kinase (Hykk), found in Mus musculus (Mouse).